We begin with the raw amino-acid sequence, 291 residues long: Acetyl-coenzyme A carboxylase carboxyl transferase subunit beta (291 aa).

A CoA carboxyltransferase N-terminal domain is found at leucine 29 to alanine 291. 4 residues coordinate Zn(2+): cysteine 33, cysteine 36, cysteine 52, and cysteine 55. The C4-type zinc-finger motif lies at cysteine 33–cysteine 55.

The protein belongs to the AccD/PCCB family. In terms of assembly, acetyl-CoA carboxylase is a heterohexamer composed of biotin carboxyl carrier protein (AccB), biotin carboxylase (AccC) and two subunits each of ACCase subunit alpha (AccA) and ACCase subunit beta (AccD). It depends on Zn(2+) as a cofactor.

The protein localises to the cytoplasm. The enzyme catalyses N(6)-carboxybiotinyl-L-lysyl-[protein] + acetyl-CoA = N(6)-biotinyl-L-lysyl-[protein] + malonyl-CoA. The protein operates within lipid metabolism; malonyl-CoA biosynthesis; malonyl-CoA from acetyl-CoA: step 1/1. In terms of biological role, component of the acetyl coenzyme A carboxylase (ACC) complex. Biotin carboxylase (BC) catalyzes the carboxylation of biotin on its carrier protein (BCCP) and then the CO(2) group is transferred by the transcarboxylase to acetyl-CoA to form malonyl-CoA. This is Acetyl-coenzyme A carboxylase carboxyl transferase subunit beta from Synechococcus sp. (strain RCC307).